The following is a 248-amino-acid chain: 2,3-bisphosphoglycerate-dependent phosphoglycerate mutase (248 aa).

Residues 8–15 (RHGESTWN), 21–22 (TG), R60, 87–90 (ERHY), K98, 114–115 (RR), and 183–184 (GN) each bind substrate. H9 serves as the catalytic Tele-phosphohistidine intermediate. The active-site Proton donor/acceptor is E87.

It belongs to the phosphoglycerate mutase family. BPG-dependent PGAM subfamily. Homodimer.

It catalyses the reaction (2R)-2-phosphoglycerate = (2R)-3-phosphoglycerate. The protein operates within carbohydrate degradation; glycolysis; pyruvate from D-glyceraldehyde 3-phosphate: step 3/5. Its function is as follows. Catalyzes the interconversion of 2-phosphoglycerate and 3-phosphoglycerate. This Burkholderia ambifaria (strain ATCC BAA-244 / DSM 16087 / CCUG 44356 / LMG 19182 / AMMD) (Burkholderia cepacia (strain AMMD)) protein is 2,3-bisphosphoglycerate-dependent phosphoglycerate mutase.